We begin with the raw amino-acid sequence, 51 residues long: Large ribosomal subunit protein eL39 (51 aa).

This sequence belongs to the eukaryotic ribosomal protein eL39 family.

This chain is Large ribosomal subunit protein eL39, found in Sulfurisphaera tokodaii (strain DSM 16993 / JCM 10545 / NBRC 100140 / 7) (Sulfolobus tokodaii).